The primary structure comprises 369 residues: Carbamoyl phosphate synthase small chain (369 aa).

A CPSase region spans residues 1-168 (MYGILVLEDG…KKVVKYPAKD (168 aa)). L-glutamine contacts are provided by Ser45, Gly220, and Gly222. The Glutamine amidotransferase type-1 domain maps to 172-364 (SCVVIDCGVK…VALGMKFKQE (193 aa)). The active-site Nucleophile is the Cys247. L-glutamine-binding residues include Leu248, Gln251, Asn289, Gly291, and Phe292. Catalysis depends on residues His337 and Glu339.

It belongs to the CarA family. As to quaternary structure, composed of two chains; the small (or glutamine) chain promotes the hydrolysis of glutamine to ammonia, which is used by the large (or ammonia) chain to synthesize carbamoyl phosphate. Tetramer of heterodimers (alpha,beta)4.

It catalyses the reaction hydrogencarbonate + L-glutamine + 2 ATP + H2O = carbamoyl phosphate + L-glutamate + 2 ADP + phosphate + 2 H(+). It carries out the reaction L-glutamine + H2O = L-glutamate + NH4(+). It participates in amino-acid biosynthesis; L-arginine biosynthesis; carbamoyl phosphate from bicarbonate: step 1/1. Its pathway is pyrimidine metabolism; UMP biosynthesis via de novo pathway; (S)-dihydroorotate from bicarbonate: step 1/3. Functionally, small subunit of the glutamine-dependent carbamoyl phosphate synthetase (CPSase). CPSase catalyzes the formation of carbamoyl phosphate from the ammonia moiety of glutamine, carbonate, and phosphate donated by ATP, constituting the first step of 2 biosynthetic pathways, one leading to arginine and/or urea and the other to pyrimidine nucleotides. The small subunit (glutamine amidotransferase) binds and cleaves glutamine to supply the large subunit with the substrate ammonia. This is Carbamoyl phosphate synthase small chain from Methanococcus vannielii (strain ATCC 35089 / DSM 1224 / JCM 13029 / OCM 148 / SB).